We begin with the raw amino-acid sequence, 345 residues long: MSTEIQKIEDNNLKESQMWNSKELKEAIKEIEKMFGKGSIMVLGQSDNLNVETFSSGSLLLDNALGIGGYPKGRIIEIYGPESSGKTTLSLHAICEIQKLGGIAAFIDAEHSLDPKYCHNLGIDTNKLLVSQPDNGEQALDILEMLINSNSIDLIIVDSVAALVPKTELEGEMSDQSIGLQARMMSKALRKLNGLIAKSNTTVIFINQLREKIGVIFGNPETTTGGKALKFFSSIRLEVRKSENILSNSEIIGNKIKIKIVKNKTAIPFKTATISLLYNKGIDKIGELVDLLVSYEIVEKSGVWYSYQNEKIGQGKTSVIQWLNADEKRTNELIQQVKKIIEQKE.

80-87 is an ATP binding site; the sequence is GPESSGKT.

The protein belongs to the RecA family.

The protein localises to the cytoplasm. Functionally, can catalyze the hydrolysis of ATP in the presence of single-stranded DNA, the ATP-dependent uptake of single-stranded DNA by duplex DNA, and the ATP-dependent hybridization of homologous single-stranded DNAs. It interacts with LexA causing its activation and leading to its autocatalytic cleavage. In Mycoplasma mycoides subsp. mycoides SC (strain CCUG 32753 / NCTC 10114 / PG1), this protein is Protein RecA.